The primary structure comprises 394 residues: Elongation factor Tu 2 (394 aa).

The tr-type G domain occupies 10 to 204; the sequence is KPHVNVGTIG…FLDSYIPEPE (195 aa). A G1 region spans residues 19–26; that stretch reads GHVDHGKT. 19–26 lines the GTP pocket; the sequence is GHVDHGKT. Thr-26 serves as a coordination point for Mg(2+). A G2 region spans residues 60-64; sequence GITIN. The G3 stretch occupies residues 81–84; sequence DCPG. GTP is bound by residues 81–85 and 136–139; these read DCPGH and NKCD. The segment at 136–139 is G4; it reads NKCD. The tract at residues 174–176 is G5; that stretch reads SAL.

This sequence belongs to the TRAFAC class translation factor GTPase superfamily. Classic translation factor GTPase family. EF-Tu/EF-1A subfamily. As to quaternary structure, monomer.

The protein resides in the cytoplasm. The enzyme catalyses GTP + H2O = GDP + phosphate + H(+). GTP hydrolase that promotes the GTP-dependent binding of aminoacyl-tRNA to the A-site of ribosomes during protein biosynthesis. This chain is Elongation factor Tu 2, found in Escherichia coli O139:H28 (strain E24377A / ETEC).